The sequence spans 357 residues: Putative lipopolysaccharide heptosyltransferase 4 (357 aa).

It catalyses the reaction alpha-D-Glc-(1-&gt;2)-alpha-D-Glc-(1-&gt;3)-[alpha-D-Gal-(1-&gt;6)]-alpha-D-Glc-(1-&gt;3)-[L-alpha-D-Hep-(1-&gt;7)]-4-O-PO3(2-)-L-alpha-D-Hep-(1-&gt;3)-4-O-PO3(2-)-L-alpha-D-Hep-(1-&gt;5)-[alpha-Kdo-(2-&gt;4)]-alpha-Kdo-(2-&gt;6)-lipid A + ADP-L-glycero-beta-D-manno-heptose = lipid A-core + ADP + H(+). The protein operates within bacterial outer membrane biogenesis; LPS core biosynthesis. In terms of biological role, transferase involved in the biosynthesis of the core oligosaccharide region of lipopolysaccharide (LPS). May catalyze the addition of the terminal heptose (heptose IV) to the outer-core glucose III, the last step of the lipid A-core oligosaccharide biosynthesis. The polypeptide is Putative lipopolysaccharide heptosyltransferase 4 (Escherichia coli (strain K12)).